A 159-amino-acid polypeptide reads, in one-letter code: SsrA-binding protein (159 aa).

The disordered stretch occupies residues 131 to 159 (KGKKLHDKRESEKERDWNRQKSRLLKDNG). Residues 137–159 (DKRESEKERDWNRQKSRLLKDNG) are compositionally biased toward basic and acidic residues.

It belongs to the SmpB family.

The protein resides in the cytoplasm. Functionally, required for rescue of stalled ribosomes mediated by trans-translation. Binds to transfer-messenger RNA (tmRNA), required for stable association of tmRNA with ribosomes. tmRNA and SmpB together mimic tRNA shape, replacing the anticodon stem-loop with SmpB. tmRNA is encoded by the ssrA gene; the 2 termini fold to resemble tRNA(Ala) and it encodes a 'tag peptide', a short internal open reading frame. During trans-translation Ala-aminoacylated tmRNA acts like a tRNA, entering the A-site of stalled ribosomes, displacing the stalled mRNA. The ribosome then switches to translate the ORF on the tmRNA; the nascent peptide is terminated with the 'tag peptide' encoded by the tmRNA and targeted for degradation. The ribosome is freed to recommence translation, which seems to be the essential function of trans-translation. The chain is SsrA-binding protein from Rhizobium etli (strain CIAT 652).